Consider the following 159-residue polypeptide: Ankyrin repeat domain-containing protein 37 (159 aa).

3 ANK repeats span residues 1 to 25, 30 to 59, and 63 to 92; these read MLLLSCNLEEDDLKSLLETGASVNA, QEQSPAHLAAGGGLACFLLWQLQTGADLNQ, and LGETPLHKAAKVGSLDCLSLLVASDVQIGV. The short motif at 130 to 150 is the Nuclear localization signal element; it reads EQQERDPRAPVLRQKRSFRTV.

Ubiquitinated by the CRL2(FEM1B) complex, leading to its degradation. Expressed testis, ovary, uterus, kidney, liver, but not in other tissues.

The protein resides in the nucleus. It is found in the cytoplasm. This is Ankyrin repeat domain-containing protein 37 from Mus musculus (Mouse).